Reading from the N-terminus, the 228-residue chain is UPF0758 protein str1465 (228 aa).

The region spanning 103 to 225 (QIMSSQQVAR…YYSFREERED (123 aa)) is the MPN domain. H174, H176, and D187 together coordinate Zn(2+). Residues 174 to 187 (HNHPSGEAYPSRND) carry the JAMM motif motif.

The protein belongs to the UPF0758 family.

The sequence is that of UPF0758 protein str1465 from Streptococcus thermophilus (strain CNRZ 1066).